The chain runs to 492 residues: Glutamyl-tRNA(Gln) amidotransferase subunit A (492 aa).

Catalysis depends on charge relay system residues K84 and S159. S183 serves as the catalytic Acyl-ester intermediate.

This sequence belongs to the amidase family. GatA subfamily. Heterotrimer of A, B and C subunits.

It catalyses the reaction L-glutamyl-tRNA(Gln) + L-glutamine + ATP + H2O = L-glutaminyl-tRNA(Gln) + L-glutamate + ADP + phosphate + H(+). Allows the formation of correctly charged Gln-tRNA(Gln) through the transamidation of misacylated Glu-tRNA(Gln) in organisms which lack glutaminyl-tRNA synthetase. The reaction takes place in the presence of glutamine and ATP through an activated gamma-phospho-Glu-tRNA(Gln). The protein is Glutamyl-tRNA(Gln) amidotransferase subunit A of Anaeromyxobacter dehalogenans (strain 2CP-C).